Reading from the N-terminus, the 300-residue chain is 4-hydroxybenzoate octaprenyltransferase (300 aa).

A run of 8 helical transmembrane segments spans residues 32–52 (IGTY…SEGA), 55–75 (LKNL…GCVI), 108–128 (LFGI…ALTI), 149–169 (YLPQ…AFAA), 178–198 (AWLL…MYAM), 222–242 (AAVA…GAQH), 246–266 (VYYQ…QHLI), and 278–298 (FLNN…EFLF).

Belongs to the UbiA prenyltransferase family. The cofactor is Mg(2+).

Its subcellular location is the cell inner membrane. The catalysed reaction is all-trans-octaprenyl diphosphate + 4-hydroxybenzoate = 4-hydroxy-3-(all-trans-octaprenyl)benzoate + diphosphate. Its pathway is cofactor biosynthesis; ubiquinone biosynthesis. Catalyzes the prenylation of para-hydroxybenzoate (PHB) with an all-trans polyprenyl group. Mediates the second step in the final reaction sequence of ubiquinone-8 (UQ-8) biosynthesis, which is the condensation of the polyisoprenoid side chain with PHB, generating the first membrane-bound Q intermediate 3-octaprenyl-4-hydroxybenzoate. The sequence is that of 4-hydroxybenzoate octaprenyltransferase from Hahella chejuensis (strain KCTC 2396).